The following is a 61-amino-acid chain: Probable pancreatic secretory proteinase inhibitor (61 aa).

Positions 6-61 constitute a Kazal-like domain; sequence LYRKPSCGEMSAMHACPMNFAPVCGTDGNTYPNECSLCFQRQNTKTDILITKDDRC. Cystine bridges form between cysteine 12-cysteine 43, cysteine 21-cysteine 40, and cysteine 29-cysteine 61.

It localises to the secreted. This Anguilla anguilla (European freshwater eel) protein is Probable pancreatic secretory proteinase inhibitor.